A 485-amino-acid chain; its full sequence is MEGLYKEAVTFADRYNLLNVYGISAVIAVGLAIYSASLAIYRLYFHPLAGFPGPRIAAATRWYEFYYDVIKRGQYVYKIEEMHQKYGPIIRINPHEIVINDPDFYNSVYVAGNTRRTAIWPRYRTGIGFDGSHTMTENHELHRRRRKPLEPFFSRMGIDKMEPMIIEEAKLLNDRLTGLKGSGNVIRLDHVFSAFAGDVIGRICSESPPDMMNHPEFGKEWSAQFDREYRETAPFVHARPATGLVSSLSQSTSACPNRDRLARMIPTGFLLRVYPGAAGFNVFRQLAISHIVDAKKDNFSKEKVEKNSKSSVFRYIITSEMPASECETERLSREAMVLFGAGTATTARTMGFMCYYILTNPHMRERLADELRDVMADYPHKLPSWQELERLPYLQAMIKEGLRLSYGVMRRLPRISPDIPLVYKQWSIPAGTPVGMAAYSLHTDPEVYPEPFKFIPERWLGKYDSRMDRNWVPFSRGSRNCLGMK.

Residues 20-40 (VYGISAVIAVGLAIYSASLAI) form a helical membrane-spanning segment. C481 serves as a coordination point for heme.

It belongs to the cytochrome P450 family. Requires heme as cofactor.

The protein localises to the membrane. The protein operates within secondary metabolite biosynthesis; terpenoid biosynthesis. Its function is as follows. Cytochrome P450 monooxygenase; part of the gene cluster that mediates the biosynthesis of talaronoid C, a fusicoccane diterpenoid with an unprecedented tricyclic 5/8/6 ring system. The first step in the pathway is performed by the fusicoccadiene synthase tndC that possesses both prenyl transferase and terpene cyclase activity, converting isopentenyl diphosphate and dimethylallyl diphosphate into geranylgeranyl diphosphate (GGDP) and further converting GGDP into talarodiene, a precursor for talaronoid C. The remaining enzymes from the cluster include the cytochrome P450 monooxygenase tndB, the aldehyde reductase tndE and the alcohol dehydrogenase tndF that are involved in the conversion of talarodiene into talaronoid C. This Aspergillus flavipes protein is Cytochrome P450 monooxygenase tndB.